A 630-amino-acid polypeptide reads, in one-letter code: Probable potassium transport system protein Kup 2 (630 aa).

The next 12 membrane-spanning stretches (helical) occupy residues 17 to 37, 56 to 76, 108 to 128, 145 to 165, 176 to 196, 214 to 234, 255 to 275, 293 to 313, 345 to 365, 375 to 395, 402 to 422, and 427 to 447; these read FWAL…TSPL, VIVL…VTAK, VFLM…SMIT, PALE…LFAF, AFGP…LIHI, FMLS…LAVT, WLFF…ALVL, FLVP…QAVI, IYLP…VLLF, YGIA…VVIW, PAAA…FFSA, and LLEG…LIWV.

This sequence belongs to the HAK/KUP transporter (TC 2.A.72) family.

The protein localises to the cell inner membrane. The catalysed reaction is K(+)(in) + H(+)(in) = K(+)(out) + H(+)(out). Its function is as follows. Transport of potassium into the cell. Likely operates as a K(+):H(+) symporter. The chain is Probable potassium transport system protein Kup 2 from Rhodopseudomonas palustris (strain BisB18).